Here is a 535-residue protein sequence, read N- to C-terminus: Solute carrier family 22 member 7 (535 aa).

Transmembrane regions (helical) follow at residues 21 to 41, 144 to 164, 178 to 198, 202 to 222, 232 to 252, 257 to 277, 344 to 364, 375 to 395, 402 to 422, 429 to 449, 464 to 484, and 489 to 509; these read LVLMALPRMLLPMHFLLPVFM, ITSTCFFIGVLVGAVVYGYLS, VSSLVLGLMSAASINYIMFVV, LTGSALAGFTIIVLPLELEWL, VISTVFWSGGVLLLALVGYLI, WLLLAATLPCVPGIISIWWVP, ISLCCMMVWFGVNFSYYGLTL, QTQLLFGAVELPSKIMVYFLV, LTEAGMLLGAALTFGTSLLVS, ITALVVVGKAFSEAAFTTAYL, LGLTALMGRLGASLAPLAALL, and LLLPKVAYGGIALVAACTALL.

This sequence belongs to the major facilitator (TC 2.A.1) superfamily. Organic cation transporter (TC 2.A.1.19) family. In terms of tissue distribution, expressed in liver and kidney. Expressed at low levels in adipose tissue. Expressed in fetal liver. In kidney, expressed at the brush border of the proximal tubule S3 segment (S3) in the outer stripe and medullary rays. In kidney, expression is higher in female than male.

The protein resides in the basolateral cell membrane. The protein localises to the apical cell membrane. It localises to the cell membrane. The catalysed reaction is orotate(out) + L-glutamate(in) = orotate(in) + L-glutamate(out). The enzyme catalyses 3',5'-cyclic GMP(in) = 3',5'-cyclic GMP(out). It catalyses the reaction GMP(in) = GMP(out). It carries out the reaction 2'-deoxyguanosine(in) = 2'-deoxyguanosine(out). The catalysed reaction is GDP(in) = GDP(out). The enzyme catalyses guanosine(in) = guanosine(out). It catalyses the reaction GTP(in) = GTP(out). It carries out the reaction 3',5'-cyclic AMP(in) = 3',5'-cyclic AMP(out). The catalysed reaction is creatinine(in) = creatinine(out). The enzyme catalyses prostaglandin E2(out) = prostaglandin E2(in). It catalyses the reaction 2-oxoglutarate(in) = 2-oxoglutarate(out). It carries out the reaction glutarate(in) = glutarate(out). The catalysed reaction is urate(out) = urate(in). The enzyme catalyses estrone 3-sulfate(out) = estrone 3-sulfate(in). Its function is as follows. Functions as a Na(+)-independent bidirectional multispecific transporter. Contributes to the renal and hepatic elimination of endogenous organic compounds from the systemic circulation into the urine and bile, respectively. Capable of transporting a wide range of purine and pyrimidine nucleobases, nucleosides, and nucleotides with cGMP, 2'deoxyguanosine and GMP being the preferred substrates. Functions as a pH- and chloride-independent cGMP bidirectional facilitative transporter that can regulate both intracellular and extracellular levels of cGMP and may be involved in cGMP signaling pathways. Mediates orotate/glutamate bidirectional exchange and most likely display a physiological role in hepatic release of glutamate into the blood. Involved in renal secretion and possible reabsorption of creatinine. Able to uptake prostaglandin E2 (PGE2) and may contribute to PGE2 renal excretion. Also transports alpha-ketoglutarate and urate. Apart from the orotate/glutamate exchange, the counterions for the uptake of other SLC22A7/OAT2 substrates remain to be identified. The sequence is that of Solute carrier family 22 member 7 from Rattus norvegicus (Rat).